Consider the following 143-residue polypeptide: Histone H2A.z (143 aa).

It belongs to the histone H2A family. As to quaternary structure, the nucleosome is a histone octamer containing two molecules each of H2A, H2B, H3 and H4 assembled in one H3-H4 heterotetramer and two H2A-H2B heterodimers. The octamer wraps approximately 147 bp of DNA.

Its subcellular location is the nucleus. It is found in the chromosome. In terms of biological role, core component of nucleosome which plays a central role in DNA double strand break (DSB) repair. Nucleosomes wrap and compact DNA into chromatin, limiting DNA accessibility to the cellular machineries which require DNA as a template. Histones thereby play a central role in transcription regulation, DNA repair, DNA replication and chromosomal stability. DNA accessibility is regulated via a complex set of post-translational modifications of histones, also called histone code, and nucleosome remodeling. This chain is Histone H2A.z (H2AZ), found in Dictyostelium discoideum (Social amoeba).